The chain runs to 232 residues: Orotidine 5'-phosphate decarboxylase (232 aa).

Residues Asp-11, Lys-32, 59–68 (DLKFHDIPNT), Thr-118, Arg-180, Gln-189, Gly-209, and Arg-210 contribute to the substrate site. Lys-61 (proton donor) is an active-site residue.

Belongs to the OMP decarboxylase family. Type 1 subfamily. In terms of assembly, homodimer.

The enzyme catalyses orotidine 5'-phosphate + H(+) = UMP + CO2. It participates in pyrimidine metabolism; UMP biosynthesis via de novo pathway; UMP from orotate: step 2/2. Catalyzes the decarboxylation of orotidine 5'-monophosphate (OMP) to uridine 5'-monophosphate (UMP). In Gloeothece citriformis (strain PCC 7424) (Cyanothece sp. (strain PCC 7424)), this protein is Orotidine 5'-phosphate decarboxylase.